Here is a 776-residue protein sequence, read N- to C-terminus: Cullin-1 (776 aa).

Position 63 is an omega-N-methylarginine (Arg63). A Cullin neddylation domain is found at 706–766 (DRKLLIQAAI…IEKEYLERVD (61 aa)). Residue Lys720 forms a Glycyl lysine isopeptide (Lys-Gly) (interchain with G-Cter in NEDD8) linkage.

It belongs to the cullin family. As to quaternary structure, component of multiple Cul1-RING E3 ubiquitin-protein ligase complexes commonly known as SCF (SKP1-CUL1-F-box) complexes, consisting of CUL1, SKP1, RBX1 and a variable F-box domain-containing protein as substrate-specific subunit. Component of the SCF(FBXW11) complex containing FBXW11. Component of the SCF(SKP2) complex containing SKP2, in which it interacts directly with SKP1, SKP2 and RBX1. Component of the SCF(FBXW2) complex containing FBXW2. Component of the SCF(FBXO32) complex containing FBXO32. Component of the probable SCF(FBXO7) complex containing FBXO7. Component of the SCF(FBXO10) complex containing FBXO10. Component of the SCF(FBXO11) complex containing FBXO11. Component of the SCF(FBXO25) complex containing FBXO25. Component of the SCF(FBXO33) complex containing FBXO33. Component of the probable SCF(FBXO4) complex containing FBXO4. Component of the SCF(FBXO44) complex, composed of SKP1, CUL1 and FBXO44. Component of the SCF(BTRC) complex, composed of SKP1, CUL1 and BTRC. This complex binds phosphorylated NFKBIA. Part of a SCF complex consisting of CUL1, RBX1, SKP1 and FBXO2. Component of a SCF(SKP2)-like complex containing CUL1, SKP1, TRIM21 and SKP2. Component of the SCF(FBXO17) complex, composed of SKP1, CUL1 and FBXO17. Component of the SCF(FBXO27) complex, composed of SKP1, CUL1 and FBXO27. Component of the SCF(CCNF) complex consisting of CUL1, RBX1, SKP1 and CCNF. Interacts with CCNF. Component of the SCF(FBXL3) complex composed of CUL1, SKP1, RBX1 and FBXL3. Component of the SCF(FBXL21) complex composed of CUL1, SKP1, RBX1 and FBXL21. Component of the SCF(FBXO9) composed of CUL1, SKP1, RBX1 and FBXO9. Component of the SCF(FBXW7) composed of CUL1, SKP1, RBX1 and FBXW7. Component of the SCF(FBXO31) complex composed of CUL1, SKP1, RBX1 and FBXO31. Interacts with CHEK2; mediates CHEK2 ubiquitination and regulates its function. Part of a complex with TIP120A/CAND1 and RBX1. The unneddylated form interacts with TIP120A/CAND1 and the interaction mediates the exchange of the F-box substrate-specific subunit. Can self-associate. Interacts with FBXW8. Interacts with RNF7. Interacts with TRIM21. Interacts with COPS2. Interacts with UBE2M. Identified in a complex with RBX1 and GLMN. Interacts with CEP68 as part of the SCF(FBXW11) complex; the interaction is probably mediated by FBXW11 and the complex also contains CDK5RAP2 and PCNT. Interacts (when neddylated) with ARIH1; leading to activate the E3 ligase activity of ARIH1. Interacts with COPS9 isoform 2. Interacts with UBXN1. Interacts with KAT7, probably as part of an SCF complex; the interaction mediates KAT7 ubiquitination. Interacts with NOTCH2. Part of a complex that contains DCUN1D5, CUL1 and RBX1; this complex is bridged by CUL1. Interacts (unneddylated form) with DCUN1D1, DCUN1D2, DCUN1D3, DCUN1D4 and DCUN1D5; these interactions promote the cullin neddylation. Interacts (via the C-terminal domain) with CUL7; the interaction seems to be mediated by FBXW8; it is likely specific to FBXW8, but not other F-box proteins. Interacts with UBR2, as part of SCF(BTRC) complex; the interaction mediates 'Lys-48'-linked ubiquitination of UBR2 and is regulated by DUSP22 in the T-cell receptor signaling pathway. (Microbial infection) Interacts with Epstein-Barr virus BPLF1. In terms of assembly, (Microbial infection) Interacts with Human adenovirus early E1A protein; this interaction inhibits RBX1-CUL1-dependent elongation reaction of ubiquitin chains by the SCF(FBXW7) complex. As to quaternary structure, (Microbial infection) Interacts with vaccinia virus protein C9L. (Microbial infection) Interacts with Epstein-Barr virus (EBV) tegument protein BGLF2; this interaction might facilitate CUL1 recruitment to STAT2, leading to ubiquitination and degradation of the latter. In terms of processing, neddylated; which enhances the ubiquitination activity of SCF. Neddylation prevents binding of the inhibitor CAND1. Neddylation leads to structural rearrangment in the complex that allows interaction between the E2 ubiquitin-conjugating enzyme and the acceptor ubiquitin. Deneddylated via its interaction with the COP9 signalosome (CSN) complex. (Microbial infection) Deneddylated by Epstein-Barr virus BPLF1 leading to a S-phase-like environment that is required for efficient replication of the viral genome. As to expression, expressed in lung fibroblasts.

It functions in the pathway protein modification; protein ubiquitination. In terms of biological role, core component of multiple cullin-RING-based SCF (SKP1-CUL1-F-box protein) E3 ubiquitin-protein ligase complexes, which mediate the ubiquitination of proteins involved in cell cycle progression, signal transduction and transcription. SCF complexes and ARIH1 collaborate in tandem to mediate ubiquitination of target proteins. In the SCF complex, serves as a rigid scaffold that organizes the SKP1-F-box protein and RBX1 subunits. May contribute to catalysis through positioning of the substrate and the ubiquitin-conjugating enzyme. The E3 ubiquitin-protein ligase activity of the complex is dependent on the neddylation of the cullin subunit and exchange of the substrate recognition component is mediated by TIP120A/CAND1. The functional specificity of the SCF complex depends on the F-box protein as substrate recognition component. SCF(BTRC) and SCF(FBXW11) direct ubiquitination of CTNNB1 and participate in Wnt signaling. SCF(FBXW11) directs ubiquitination of phosphorylated NFKBIA. SCF(BTRC) directs ubiquitination of NFKBIB, NFKBIE, ATF4, SMAD3, SMAD4, CDC25A, FBXO5 and probably NFKB2. SCF(BTRC) and/or SCF(FBXW11) direct ubiquitination of CEP68. SCF(SKP2) directs ubiquitination of phosphorylated CDKN1B/p27kip and is involved in regulation of G1/S transition. SCF(SKP2) directs ubiquitination of ORC1, CDT1, RBL2, ELF4, CDKN1A, RAG2, FOXO1A, and probably MYC and TAL1. SCF(FBXW7) directs ubiquitination of CCNE1, NOTCH1 released notch intracellular domain (NICD), and probably PSEN1. SCF(FBXW2) directs ubiquitination of GCM1. SCF(FBXO32) directs ubiquitination of MYOD1. SCF(FBXO7) directs ubiquitination of BIRC2 and DLGAP5. SCF(FBXO33) directs ubiquitination of YBX1. SCF(FBXO1) directs ubiquitination of BCL6 and DTL but does not seem to direct ubiquitination of TP53. SCF(BTRC) mediates the ubiquitination of NFKBIA at 'Lys-21' and 'Lys-22'; the degradation frees the associated NFKB1-RELA dimer to translocate into the nucleus and to activate transcription. SCF(CCNF) directs ubiquitination of CCP110. SCF(FBXL3) and SCF(FBXL21) direct ubiquitination of CRY1 and CRY2. SCF(FBXO9) directs ubiquitination of TTI1 and TELO2. SCF(FBXO10) directs ubiquitination of BCL2. Neddylated CUL1-RBX1 ubiquitinates p53/TP53 recruited by Cul7-RING(FBXW8) complex. SCF(BTRC) directs 'Lys-48'-linked ubiquitination of UBR2 in the T-cell receptor signaling pathway. The SCF(FBXO31) protein ligase complex specifically mediates the ubiquitination of proteins amidated at their C-terminus in response to oxidative stress. The sequence is that of Cullin-1 (CUL1) from Homo sapiens (Human).